Reading from the N-terminus, the 104-residue chain is EPLCRRQFQQHQHLRACQRYIRRRAQRGGLVDEQRGPALRLCCNQLRQVNKPCVCPVLRQAAHQQLYQGQIEGPRQVRQLFRAARNLPNICKIPAVGRCQFTRW.

Disulfide bonds link cysteine 4/cysteine 53, cysteine 17/cysteine 42, cysteine 43/cysteine 91, and cysteine 55/cysteine 99.

It belongs to the 2S seed storage albumins family. In terms of assembly, heterodimer of a small A and a large B chain linked by disulfide bonds.

2S seed storage protein having sweetness-inducing activity. This form is not heat stable. This chain is Sweet protein mabinlin-1, found in Capparis masaikai (Mabinlang).